We begin with the raw amino-acid sequence, 266 residues long: Glucosamine-6-phosphate deaminase (266 aa).

Catalysis depends on aspartate 72, which acts as the Proton acceptor; for enolization step. The active-site For ring-opening step is aspartate 141. Histidine 143 (proton acceptor; for ring-opening step) is an active-site residue. Glutamate 148 serves as the catalytic For ring-opening step.

Belongs to the glucosamine/galactosamine-6-phosphate isomerase family. NagB subfamily. In terms of assembly, homohexamer.

The enzyme catalyses alpha-D-glucosamine 6-phosphate + H2O = beta-D-fructose 6-phosphate + NH4(+). The protein operates within amino-sugar metabolism; N-acetylneuraminate degradation; D-fructose 6-phosphate from N-acetylneuraminate: step 5/5. Allosterically activated by N-acetylglucosamine 6-phosphate (GlcNAc6P). Catalyzes the reversible isomerization-deamination of glucosamine 6-phosphate (GlcN6P) to form fructose 6-phosphate (Fru6P) and ammonium ion. The protein is Glucosamine-6-phosphate deaminase of Aeromonas salmonicida (strain A449).